A 137-amino-acid polypeptide reads, in one-letter code: Large ribosomal subunit protein uL16 (137 aa).

Over residues 1-17 (MLQPKRTKFRKQQKGRN) the composition is skewed to basic residues. A disordered region spans residues 1–21 (MLQPKRTKFRKQQKGRNRGQA).

Belongs to the universal ribosomal protein uL16 family. As to quaternary structure, part of the 50S ribosomal subunit.

In terms of biological role, binds 23S rRNA and is also seen to make contacts with the A and possibly P site tRNAs. The polypeptide is Large ribosomal subunit protein uL16 (Nitrosococcus oceani (strain ATCC 19707 / BCRC 17464 / JCM 30415 / NCIMB 11848 / C-107)).